Here is a 136-residue protein sequence, read N- to C-terminus: Putative zinc finger protein 818 (136 aa).

The segment at 64 to 83 adopts a C2H2-type 1; degenerate zinc-finger fold; the sequence is NVCGKVLSQNSHLVNHQRIH. A C2H2-type 2 zinc finger spans residues 89-111; that stretch reads YRCHECGKAFTQGSRFINHQIVH.

It belongs to the krueppel C2H2-type zinc-finger protein family.

It localises to the nucleus. In terms of biological role, may be involved in transcriptional regulation. The protein is Putative zinc finger protein 818 (ZNF818P) of Homo sapiens (Human).